A 256-amino-acid polypeptide reads, in one-letter code: F-actin-capping protein subunit alpha (256 aa).

Position 31 is a phosphoserine (serine 31).

This sequence belongs to the F-actin-capping protein alpha subunit family. Component of the F-actin capping complex, composed of a heterodimer of an alpha and a beta subunit.

It localises to the cytoplasm. It is found in the cytoskeleton. The protein localises to the actin patch. Functionally, F-actin-capping proteins bind in a Ca(2+)-independent manner to the fast growing ends of actin filaments (barbed end) thereby blocking the exchange of subunits at these ends. Unlike other capping proteins (such as gelsolin and severin), these proteins do not sever actin filaments. Competes with formin cdc12 for attachment to the actin filaments barbed ends. Slowly replaces cdc12 on the barbed ends in preparation for filament disassembly during contractile ring constriction. The polypeptide is F-actin-capping protein subunit alpha (acp1) (Schizosaccharomyces pombe (strain 972 / ATCC 24843) (Fission yeast)).